The primary structure comprises 491 residues: Protein DETOXIFICATION 28 (491 aa).

A run of 12 helical transmembrane segments spans residues 47–67 (IVGP…ITQA), 77–97 (LAAI…LFIG), 127–147 (IVLF…TPIL), 160–180 (SGII…FFPI), 192–212 (VIAI…WLFV), 228–248 (VSWW…GCPL), 272–292 (GIMV…TGNL), 302–322 (MSIC…FFAG), 352–372 (IIGI…GWMF), 387–407 (ILLS…GVAV), 414–434 (LVAF…GIVM), and 444–464 (GIWA…LIFI).

This sequence belongs to the multi antimicrobial extrusion (MATE) (TC 2.A.66.1) family.

The protein resides in the membrane. This chain is Protein DETOXIFICATION 28, found in Arabidopsis thaliana (Mouse-ear cress).